We begin with the raw amino-acid sequence, 512 residues long: D-alanine--D-alanyl carrier protein ligase (512 aa).

Residue 152–153 coordinates ATP; that stretch reads TS. D199 is a D-alanine binding site. ATP is bound at residue 294 to 299; it reads NAYGPT. V303 provides a ligand contact to D-alanine. ATP-binding positions include D385, 397-400, and K499; that span reads YGGR. K499 is a D-alanine binding site.

Belongs to the ATP-dependent AMP-binding enzyme family. DltA subfamily.

It localises to the cytoplasm. It catalyses the reaction holo-[D-alanyl-carrier protein] + D-alanine + ATP = D-alanyl-[D-alanyl-carrier protein] + AMP + diphosphate. It functions in the pathway cell wall biogenesis; lipoteichoic acid biosynthesis. Its function is as follows. Catalyzes the first step in the D-alanylation of lipoteichoic acid (LTA), the activation of D-alanine and its transfer onto the D-alanyl carrier protein (Dcp) DltC. In an ATP-dependent two-step reaction, forms a high energy D-alanyl-AMP intermediate, followed by transfer of the D-alanyl residue as a thiol ester to the phosphopantheinyl prosthetic group of the Dcp. D-alanylation of LTA plays an important role in modulating the properties of the cell wall in Gram-positive bacteria, influencing the net charge of the cell wall. The protein is D-alanine--D-alanyl carrier protein ligase of Streptococcus pyogenes serotype M49 (strain NZ131).